A 335-amino-acid chain; its full sequence is Ketol-acid reductoisomerase (NADP(+)) (335 aa).

One can recognise a KARI N-terminal Rossmann domain in the interval 2–182 (VEMFYDKDAD…GCTRAGVIET (181 aa)). NADP(+) is bound by residues 25-28 (YGSQ), Arg-48, Ser-51, and 83-86 (DEIQ). The active site involves His-108. Gly-134 lines the NADP(+) pocket. Positions 183–328 (TFREETETDL…KKLRAMMPWL (146 aa)) constitute a KARI C-terminal knotted domain. Residues Asp-191, Glu-195, Glu-227, and Glu-231 each contribute to the Mg(2+) site. Ser-252 lines the substrate pocket.

This sequence belongs to the ketol-acid reductoisomerase family. Requires Mg(2+) as cofactor.

It catalyses the reaction (2R)-2,3-dihydroxy-3-methylbutanoate + NADP(+) = (2S)-2-acetolactate + NADPH + H(+). It carries out the reaction (2R,3R)-2,3-dihydroxy-3-methylpentanoate + NADP(+) = (S)-2-ethyl-2-hydroxy-3-oxobutanoate + NADPH + H(+). It participates in amino-acid biosynthesis; L-isoleucine biosynthesis; L-isoleucine from 2-oxobutanoate: step 2/4. Its pathway is amino-acid biosynthesis; L-valine biosynthesis; L-valine from pyruvate: step 2/4. In terms of biological role, involved in the biosynthesis of branched-chain amino acids (BCAA). Catalyzes an alkyl-migration followed by a ketol-acid reduction of (S)-2-acetolactate (S2AL) to yield (R)-2,3-dihydroxy-isovalerate. In the isomerase reaction, S2AL is rearranged via a Mg-dependent methyl migration to produce 3-hydroxy-3-methyl-2-ketobutyrate (HMKB). In the reductase reaction, this 2-ketoacid undergoes a metal-dependent reduction by NADPH to yield (R)-2,3-dihydroxy-isovalerate. This is Ketol-acid reductoisomerase (NADP(+)) from Methanococcoides burtonii (strain DSM 6242 / NBRC 107633 / OCM 468 / ACE-M).